The primary structure comprises 233 residues: Large ribosomal subunit protein uL1 (233 aa).

The protein belongs to the universal ribosomal protein uL1 family. In terms of assembly, part of the 50S ribosomal subunit.

Functionally, binds directly to 23S rRNA. The L1 stalk is quite mobile in the ribosome, and is involved in E site tRNA release. In terms of biological role, protein L1 is also a translational repressor protein, it controls the translation of the L11 operon by binding to its mRNA. This is Large ribosomal subunit protein uL1 from Photobacterium profundum (strain SS9).